The sequence spans 377 residues: Protein RecA (377 aa).

66–73 (GPESSGKT) contacts ATP. A disordered region spans residues 329–377 (VGVRPEEPTAEPGADAAVTSAAAATDDTAKTVSAPAAKTTKSKAAAAKS). Positions 342 to 377 (ADAAVTSAAAATDDTAKTVSAPAAKTTKSKAAAAKS) are enriched in low complexity.

This sequence belongs to the RecA family.

The protein resides in the cytoplasm. Functionally, can catalyze the hydrolysis of ATP in the presence of single-stranded DNA, the ATP-dependent uptake of single-stranded DNA by duplex DNA, and the ATP-dependent hybridization of homologous single-stranded DNAs. It interacts with LexA causing its activation and leading to its autocatalytic cleavage. This Streptomyces avermitilis (strain ATCC 31267 / DSM 46492 / JCM 5070 / NBRC 14893 / NCIMB 12804 / NRRL 8165 / MA-4680) protein is Protein RecA.